A 227-amino-acid chain; its full sequence is Orotidine 5'-phosphate decarboxylase (227 aa).

Residues Asp8, Lys30, 59-68 (DLKLYDIPNT), Thr118, Arg178, Gln187, Gly207, and Arg208 contribute to the substrate site. Catalysis depends on Lys61, which acts as the Proton donor.

The protein belongs to the OMP decarboxylase family. Type 1 subfamily. In terms of assembly, homodimer.

It catalyses the reaction orotidine 5'-phosphate + H(+) = UMP + CO2. The protein operates within pyrimidine metabolism; UMP biosynthesis via de novo pathway; UMP from orotate: step 2/2. Catalyzes the decarboxylation of orotidine 5'-monophosphate (OMP) to uridine 5'-monophosphate (UMP). The protein is Orotidine 5'-phosphate decarboxylase of Sulfurimonas denitrificans (strain ATCC 33889 / DSM 1251) (Thiomicrospira denitrificans (strain ATCC 33889 / DSM 1251)).